A 241-amino-acid polypeptide reads, in one-letter code: MATPHINAEMGDFADVVLMPGDPLRAKHIAETFLKDVKQVNDVRGMLGFTGTYKGRKISVMGHGMGIPSCSIYAKELITDFGVKKIIRVGSCGAVREDVKLRDVVIGMGACTDSKVNRLRFKDHDYAAIADFDMTRNAVDAAKAKGLNVRVGNLFSADLFYTPDPQMFDVMKKYGILGVEMEAAGIYGVAAEFGAKALTICTVSDHIVSGEQTTAAERQTTFNDMIEIALESVLLGDKESY.

Position 5 (His5) interacts with a purine D-ribonucleoside. Phosphate-binding positions include Gly21, Arg25, Arg44, and 88–91; that span reads RVGS. Residues 180 to 182 and 204 to 205 each bind a purine D-ribonucleoside; these read EME and SD. The Proton donor role is filled by Asp205.

This sequence belongs to the PNP/UDP phosphorylase family. In terms of assembly, homohexamer; trimer of homodimers.

The enzyme catalyses a purine D-ribonucleoside + phosphate = a purine nucleobase + alpha-D-ribose 1-phosphate. It catalyses the reaction a purine 2'-deoxy-D-ribonucleoside + phosphate = a purine nucleobase + 2-deoxy-alpha-D-ribose 1-phosphate. Its function is as follows. Catalyzes the reversible phosphorolytic breakdown of the N-glycosidic bond in the beta-(deoxy)ribonucleoside molecules, with the formation of the corresponding free purine bases and pentose-1-phosphate. The sequence is that of Purine nucleoside phosphorylase DeoD-type from Yersinia enterocolitica serotype O:8 / biotype 1B (strain NCTC 13174 / 8081).